The primary structure comprises 353 residues: Photosystem II D2 protein (353 aa).

T2 carries the N-acetylthreonine modification. Phosphothreonine is present on T2. Residues 41–61 form a helical membrane-spanning segment; it reads CAYFAVGGWFTGTTFVTSWYT. Residue H118 participates in chlorophyll a binding. Residues 125 to 141 form a helical membrane-spanning segment; sequence GFMLRQFELARSVQLRP. Pheophytin a contacts are provided by Q130 and N143. Residues 153–166 traverse the membrane as a helical segment; it reads VFVSVFLIYPLGQS. H198 lines the chlorophyll a pocket. Residues 208–228 traverse the membrane as a helical segment; it reads AALLCAIHGATVENTLFEDGD. A plastoquinone is bound by residues H215 and F262. A Fe cation-binding site is contributed by H215. Residue H269 participates in Fe cation binding. The helical transmembrane segment at 279–295 threads the bilayer; sequence GLWMSALGVVGLALNLR.

The protein belongs to the reaction center PufL/M/PsbA/D family. PSII is composed of 1 copy each of membrane proteins PsbA, PsbB, PsbC, PsbD, PsbE, PsbF, PsbH, PsbI, PsbJ, PsbK, PsbL, PsbM, PsbT, PsbX, PsbY, PsbZ, Psb30/Ycf12, at least 3 peripheral proteins of the oxygen-evolving complex and a large number of cofactors. It forms dimeric complexes. It depends on The D1/D2 heterodimer binds P680, chlorophylls that are the primary electron donor of PSII, and subsequent electron acceptors. It shares a non-heme iron and each subunit binds pheophytin, quinone, additional chlorophylls, carotenoids and lipids. There is also a Cl(-1) ion associated with D1 and D2, which is required for oxygen evolution. The PSII complex binds additional chlorophylls, carotenoids and specific lipids. as a cofactor.

The protein localises to the plastid. It is found in the chloroplast thylakoid membrane. It carries out the reaction 2 a plastoquinone + 4 hnu + 2 H2O = 2 a plastoquinol + O2. Its function is as follows. Photosystem II (PSII) is a light-driven water:plastoquinone oxidoreductase that uses light energy to abstract electrons from H(2)O, generating O(2) and a proton gradient subsequently used for ATP formation. It consists of a core antenna complex that captures photons, and an electron transfer chain that converts photonic excitation into a charge separation. The D1/D2 (PsbA/PsbD) reaction center heterodimer binds P680, the primary electron donor of PSII as well as several subsequent electron acceptors. D2 is needed for assembly of a stable PSII complex. The protein is Photosystem II D2 protein of Cicer arietinum (Chickpea).